The primary structure comprises 451 residues: UDP-N-acetylmuramoylalanine--D-glutamate ligase (451 aa).

Residue 116-122 (GTNGKTT) participates in ATP binding.

This sequence belongs to the MurCDEF family.

It is found in the cytoplasm. It carries out the reaction UDP-N-acetyl-alpha-D-muramoyl-L-alanine + D-glutamate + ATP = UDP-N-acetyl-alpha-D-muramoyl-L-alanyl-D-glutamate + ADP + phosphate + H(+). The protein operates within cell wall biogenesis; peptidoglycan biosynthesis. Cell wall formation. Catalyzes the addition of glutamate to the nucleotide precursor UDP-N-acetylmuramoyl-L-alanine (UMA). This chain is UDP-N-acetylmuramoylalanine--D-glutamate ligase, found in Clostridioides difficile (strain 630) (Peptoclostridium difficile).